The following is a 492-amino-acid chain: Cytochrome P450 monooxygenase rdc4 (492 aa).

Residue C435 coordinates heme.

It belongs to the cytochrome P450 family. It depends on heme as a cofactor.

It participates in secondary metabolite biosynthesis. Cytochrome P450 monooxygenase; part of the gene cluster that mediates the biosynthesis of radicicol, a resorcylic acid lactone (RAL) that irreversibly inhibits the HSP90 molecular chaperone, an important target for cancer chemotherapy. The radicicol cluster encodes only two apparent post-PKS enzymes, a cytochrome P450 monooxygenase (rdc4) and a non-heme halogenase (rdc2) that could introduce the epoxide and the chlorine, respectively. If this cluster includes all the genes required for radicicol biosynthesis, the remaining structural features of radicicol are presumably generated by the PKSs rdc1 and rdc5. The C-2' ketone could arise if the R-PKS rdc5 and NR-PKS rdc1 each carry out four iterations, in contrast to the five iteration-three iteration split for the hypothemycin PKSs. The origin of the cis 5',6' double bond is not known. The radicicol R-PKS rdc5 ER domain may catalyze either double bond isomerization or reduction in the third iteration. This is Cytochrome P450 monooxygenase rdc4 from Metacordyceps chlamydosporia (Nematophagous fungus).